The chain runs to 211 residues: MRNRILVSACAALAMFAMQAPAHAAATDQLQSFVTGVKSARGEFTQRQVKGQGANVKVTGTSSGTFVFSRPGKFTWRYTKPYEQLLQADGQTLYIYDKDLNQVTERKLDGALGSSPAAILFGSNDLDKNFVVRNGPTRDGVEWLELTPKAKDTQFERIGIGFKAGNLEAMELRDAFGNTTLLTFTGMQKNPPLAADAFRFTVPKGADVMKQ.

The first 24 residues, methionine 1–alanine 24, serve as a signal peptide directing secretion.

It belongs to the LolA family. In terms of assembly, monomer.

It localises to the periplasm. Participates in the translocation of lipoproteins from the inner membrane to the outer membrane. Only forms a complex with a lipoprotein if the residue after the N-terminal Cys is not an aspartate (The Asp acts as a targeting signal to indicate that the lipoprotein should stay in the inner membrane). In Cupriavidus taiwanensis (strain DSM 17343 / BCRC 17206 / CCUG 44338 / CIP 107171 / LMG 19424 / R1) (Ralstonia taiwanensis (strain LMG 19424)), this protein is Outer-membrane lipoprotein carrier protein.